The sequence spans 405 residues: Tryptophan synthase beta chain (405 aa).

K86 carries the N6-(pyridoxal phosphate)lysine modification.

The protein belongs to the TrpB family. As to quaternary structure, tetramer of two alpha and two beta chains. The cofactor is pyridoxal 5'-phosphate.

The enzyme catalyses (1S,2R)-1-C-(indol-3-yl)glycerol 3-phosphate + L-serine = D-glyceraldehyde 3-phosphate + L-tryptophan + H2O. It functions in the pathway amino-acid biosynthesis; L-tryptophan biosynthesis; L-tryptophan from chorismate: step 5/5. The beta subunit is responsible for the synthesis of L-tryptophan from indole and L-serine. The protein is Tryptophan synthase beta chain of Shewanella piezotolerans (strain WP3 / JCM 13877).